Here is a 278-residue protein sequence, read N- to C-terminus: Potassium/proton antiporter CemA (278 aa).

The next 4 helical transmembrane spans lie at 60–80 (YLVLLVTVPLLINQASKSLVF), 163–183 (ILAFITFAYLIFTGGRQIAVL), 201–221 (FLIILFTDIFVGFHSTHGWEV), and 239–259 (IFLFIATFPVVLDTVFKYWIF).

It belongs to the CemA family.

Its subcellular location is the plastid. The protein localises to the chloroplast inner membrane. The catalysed reaction is K(+)(in) + H(+)(out) = K(+)(out) + H(+)(in). Its function is as follows. Contributes to K(+)/H(+) antiport activity by supporting proton efflux to control proton extrusion and homeostasis in chloroplasts in a light-dependent manner to modulate photosynthesis. Prevents excessive induction of non-photochemical quenching (NPQ) under continuous-light conditions. Indirectly promotes efficient inorganic carbon uptake into chloroplasts. In Guillardia theta (Cryptophyte), this protein is Potassium/proton antiporter CemA.